A 715-amino-acid polypeptide reads, in one-letter code: Polyribonucleotide nucleotidyltransferase (715 aa).

Positions 488 and 494 each coordinate Mg(2+). The region spanning 555-614 (PRIEVMHIPTDKIRDVIGTGGKVIREIVEKTGAKINIEDDGTVKIASSNGKEIEAARKWI) is the KH domain. Positions 624 to 692 (GEIYEGTVVK…ERGKVRLSMK (69 aa)) constitute an S1 motif domain.

This sequence belongs to the polyribonucleotide nucleotidyltransferase family. Requires Mg(2+) as cofactor.

It is found in the cytoplasm. The enzyme catalyses RNA(n+1) + phosphate = RNA(n) + a ribonucleoside 5'-diphosphate. In terms of biological role, involved in mRNA degradation. Catalyzes the phosphorolysis of single-stranded polyribonucleotides processively in the 3'- to 5'-direction. This is Polyribonucleotide nucleotidyltransferase from Chelativorans sp. (strain BNC1).